The following is a 258-amino-acid chain: Cobalt-precorrin-4 C(11)-methyltransferase (258 aa).

This sequence belongs to the precorrin methyltransferase family. In terms of assembly, homodimer.

It carries out the reaction Co-precorrin-4 + S-adenosyl-L-methionine = Co-precorrin-5A + S-adenosyl-L-homocysteine + H(+). It functions in the pathway cofactor biosynthesis; adenosylcobalamin biosynthesis; cob(II)yrinate a,c-diamide from sirohydrochlorin (anaerobic route): step 4/10. Catalyzes the methylation of C-11 in cobalt-precorrin-4 to form cobalt-precorrin-5A. The protein is Cobalt-precorrin-4 C(11)-methyltransferase (cbiF) of Priestia megaterium (Bacillus megaterium).